The sequence spans 634 residues: DNA-directed RNA polymerase subunit gamma (634 aa).

4 residues coordinate Zn(2+): C74, C76, C89, and C92. The Mg(2+) site is built by D471, D473, and D475.

This sequence belongs to the RNA polymerase beta' chain family. RpoC1 subfamily. In terms of assembly, in cyanobacteria the RNAP catalytic core is composed of 2 alpha, 1 beta, 1 beta', 1 gamma and 1 omega subunit. When a sigma factor is associated with the core the holoenzyme is formed, which can initiate transcription. It depends on Mg(2+) as a cofactor. Zn(2+) serves as cofactor.

It carries out the reaction RNA(n) + a ribonucleoside 5'-triphosphate = RNA(n+1) + diphosphate. Functionally, DNA-dependent RNA polymerase catalyzes the transcription of DNA into RNA using the four ribonucleoside triphosphates as substrates. The protein is DNA-directed RNA polymerase subunit gamma of Prochlorococcus marinus (strain MIT 9312).